A 474-amino-acid chain; its full sequence is Calcium/calmodulin-dependent protein kinase type IV (474 aa).

2 positions are modified to phosphoserine; by autocatalysis: S11 and S12. One can recognise a Protein kinase domain in the interval F42–V296. ATP is bound by residues L48 to V56 and K71. Residue T53 is glycosylated (O-linked (GlcNAc) threonine). O-linked (GlcNAc) serine glycosylation occurs at S54. Residue S133 is glycosylated (O-linked (GlcNAc) serine). The active-site Proton acceptor is D160. S185 is a glycosylation site (O-linked (GlcNAc) serine). At T196 the chain carries Phosphothreonine; by CaMKK1 and CaMKK2. The tract at residues T297 to G336 is autoinhibitory domain. The segment at N302–R319 is PP2A-binding. Positions A318 to S337 are calmodulin-binding. Residue S332 is modified to Phosphoserine; by autocatalysis. Residues G336 to Y474 form a disordered region. Phosphoserine is present on S337. O-linked (GlcNAc) serine glycosylation is found at S340, S341, and S352. The span at H342–Q356 shows a compositional bias: polar residues. The segment covering D360 to S392 has biased composition (basic and acidic residues). A compositionally biased stretch (acidic residues) spans E393–E413. The segment covering Q431–E454 has biased composition (basic and acidic residues). A phosphoserine mark is found at S437 and S443.

Belongs to the protein kinase superfamily. CAMK Ser/Thr protein kinase family. CaMK subfamily. As to quaternary structure, monomer. Interacts with protein phosphatase 2A (PPP2CA/PPP2CB); the interaction is mutually exclusive with binding to Ca(2+)/calmodulin. Phosphorylated by CaMKK1 and CaMKK2 on Thr-196. Dephosphorylated by protein phosphatase 2A. Autophosphorylated on Ser-11 and Ser-12. Post-translationally, glycosylation at Ser-185 modulates the phosphorylation of CaMK4 at Thr-196 and negatively regulates its activity toward CREB1 in basal conditions and during early inomycin stimulation. In terms of processing, the N-terminus of calspermin is blocked. Isoform 1 is expressed in brain and isoform 2 is testis specific.

The protein localises to the cytoplasm. It is found in the nucleus. It carries out the reaction L-seryl-[protein] + ATP = O-phospho-L-seryl-[protein] + ADP + H(+). It catalyses the reaction L-threonyl-[protein] + ATP = O-phospho-L-threonyl-[protein] + ADP + H(+). Activated by Ca(2+)/calmodulin. Binding of calmodulin results in conformational change that relieves intrasteric autoinhibition and allows phosphorylation of Thr-196 within the activation loop by CaMKK1 or CaMKK2. Phosphorylation of Thr-196 results in a 10-20-fold increase in total activity to generate Ca(2+)/calmodulin-independent activity. Autophosphorylation of the N-terminus Ser-11 and Ser-12 is required for full activation. Inactivated by protein phosphatase 2A (PPP2CA/PPP2CB) which dephosphorylates Thr-196, thereby terminating autonomous activity and helping to maintain the enzyme in its autoinhibited state. In terms of biological role, calcium/calmodulin-dependent protein kinase that operates in the calcium-triggered CaMKK-CaMK4 signaling cascade and regulates, mainly by phosphorylation, the activity of several transcription activators, such as CREB1, MEF2D, JUN and RORA, which play pivotal roles in immune response, inflammation, and memory consolidation. In the thymus, regulates the CD4(+)/CD8(+) double positive thymocytes selection threshold during T-cell ontogeny. In CD4 memory T-cells, is required to link T-cell antigen receptor (TCR) signaling to the production of IL2, IFNG and IL4 (through the regulation of CREB and MEF2). Regulates the differentiation and survival phases of osteoclasts and dendritic cells (DCs). Mediates DCs survival by linking TLR4 and the regulation of temporal expression of BCL2. Phosphorylates the transcription activator CREB1 on 'Ser-133' in hippocampal neuron nuclei and contribute to memory consolidation and long term potentiation (LTP) in the hippocampus. Can activate the MAP kinases MAPK1/ERK2, MAPK8/JNK1 and MAPK14/p38 and stimulate transcription through the phosphorylation of ELK1 and ATF2. Can also phosphorylate in vitro CREBBP, PRM2, MEF2A and STMN1/OP18. Functionally, heat-stable, acidic, calmodulin-binding protein. This is Calcium/calmodulin-dependent protein kinase type IV (Camk4) from Rattus norvegicus (Rat).